Here is a 476-residue protein sequence, read N- to C-terminus: Probable G-protein coupled receptor No9 (476 aa).

The Extracellular segment spans residues 1–36; that stretch reads MEGPPLSPAPADNVTLNVSCGRPATLFDWADHRLIS. 2 N-linked (GlcNAc...) asparagine glycosylation sites follow: asparagine 13 and asparagine 17. A helical membrane pass occupies residues 37–60; it reads LLALAFLNLMVVAGNLLVVMAVFV. Topologically, residues 61-69 are cytoplasmic; sequence HSKLRTVTN. Residues 70–93 traverse the membrane as a helical segment; the sequence is LFIVSLACADLLVGMLVLPFSATL. Residues 94-103 lie on the Extracellular side of the membrane; sequence EVLDVWLYGD. The chain crosses the membrane as a helical span at residues 104–127; the sequence is VWCSVWLAVDVWMCTSSILNLCAI. Cysteine 106 and cysteine 192 form a disulfide bridge. Over 128 to 152 the chain is Cytoplasmic; it reads SLDRYLAVSQPISYPSLMSTRRAKQ. Residues 153 to 172 form a helical membrane-spanning segment; that stretch reads LIAAVWVLSFVICFPPLVGW. The Extracellular segment spans residues 173–200; it reads NDRPGTLIGSRGSSACRLTCELTNERGY. Residues 201 to 221 form a helical membrane-spanning segment; it reads VIYSALGSFFLPSTVMLFFYG. Residues 222 to 375 are Cytoplasmic-facing; sequence RIYRTAVSTT…FRMETKAAKT (154 aa). Positions 266–278 are enriched in low complexity; it reads AAAGGARAHGQVR. Disordered stretches follow at residues 266–293 and 317–351; these read AAAG…NKPS and DSRP…PRFI. A helical transmembrane segment spans residues 376 to 396; sequence VGIIVGLFILCWLPFFVCYLV. Residues 397–406 are Extracellular-facing; the sequence is RGFCADCVPP. The chain crosses the membrane as a helical span at residues 407–430; that stretch reads LLFSVFFWLGYCNSAVNPCVYALC. Residues 431 to 476 lie on the Cytoplasmic side of the membrane; sequence SRDFRFAFSSILCKCVCRRGAMERRFRRTLLVGNRSQTEEDCEVAD.

Belongs to the G-protein coupled receptor 1 family.

Its subcellular location is the cell membrane. In terms of biological role, orphan G-protein coupled receptor. This Amphibalanus amphitrite (Striped barnacle) protein is Probable G-protein coupled receptor No9.